The following is an 85-amino-acid chain: Conotoxin MaIr94 (85 aa).

Positions 1 to 22 (MKLTCVLIITVLFLTACQLTAA) are cleaved as a signal peptide. A propeptide spanning residues 23-49 (GNSRDKQEDPVVRSSGEVQRSEDIKLA) is cleaved from the precursor. Disulfide bonds link cysteine 52–cysteine 69, cysteine 59–cysteine 73, and cysteine 68–cysteine 84.

Belongs to the conotoxin O1 superfamily. In terms of tissue distribution, expressed by the venom duct.

Its subcellular location is the secreted. Produces no obvious effect on ionic currents when tested on the mouse dorsal rooted ganglia (DRG). This chain is Conotoxin MaIr94, found in Conus marmoreus (Marble cone).